A 312-amino-acid polypeptide reads, in one-letter code: Ribosomal RNA small subunit methyltransferase H (312 aa).

S-adenosyl-L-methionine is bound by residues Gly-35–His-37, Asp-55, Phe-85, Asp-101, and Gln-108.

It belongs to the methyltransferase superfamily. RsmH family.

The protein localises to the cytoplasm. It carries out the reaction cytidine(1402) in 16S rRNA + S-adenosyl-L-methionine = N(4)-methylcytidine(1402) in 16S rRNA + S-adenosyl-L-homocysteine + H(+). Specifically methylates the N4 position of cytidine in position 1402 (C1402) of 16S rRNA. The protein is Ribosomal RNA small subunit methyltransferase H of Buchnera aphidicola subsp. Acyrthosiphon pisum (strain Tuc7).